Here is a 532-residue protein sequence, read N- to C-terminus: GH3 domain-containing protein (532 aa).

An N-terminal signal peptide occupies residues 1-18; that stretch reads MLLLWLLLLLLLLVPLLA. The disordered stretch occupies residues 100 to 123; the sequence is LTQTSHTQEQESEETLPSPASPQY. N-linked (GlcNAc...) asparagine glycosylation is found at Asn-356 and Asn-451.

It belongs to the GH3 family. Highly expressed in mammary tissues from mature virgins and at day 13 of pregnancy, and at lower level during lactation. Expressed at intermediate level in liver. Expressed at lower level in kidney, heart and brain.

The protein localises to the endoplasmic reticulum. Its subcellular location is the nucleus envelope. This Mus musculus (Mouse) protein is GH3 domain-containing protein (Ghdc).